The chain runs to 324 residues: Probable pectinesterase A (324 aa).

Residues 1 to 19 form the signal peptide; sequence MYLPSLVLGLLGFGLTAST. Residue N27 is glycosylated (N-linked (GlcNAc...) asparagine). Residue Q142 participates in substrate binding. The active-site Proton donor is D165. D186 functions as the Nucleophile in the catalytic mechanism. Residues R246 and W248 each coordinate substrate.

Belongs to the pectinesterase family.

It is found in the secreted. It carries out the reaction [(1-&gt;4)-alpha-D-galacturonosyl methyl ester](n) + n H2O = [(1-&gt;4)-alpha-D-galacturonosyl](n) + n methanol + n H(+). Its pathway is glycan metabolism; pectin degradation; 2-dehydro-3-deoxy-D-gluconate from pectin: step 1/5. Involved in maceration and soft-rotting of plant tissue. The protein is Probable pectinesterase A (pmeA) of Aspergillus fumigatus (strain CBS 144.89 / FGSC A1163 / CEA10) (Neosartorya fumigata).